A 369-amino-acid polypeptide reads, in one-letter code: Anhydro-N-acetylmuramic acid kinase (369 aa).

12-19 (GTSLDGVD) is an ATP binding site.

Belongs to the anhydro-N-acetylmuramic acid kinase family.

The catalysed reaction is 1,6-anhydro-N-acetyl-beta-muramate + ATP + H2O = N-acetyl-D-muramate 6-phosphate + ADP + H(+). It functions in the pathway amino-sugar metabolism; 1,6-anhydro-N-acetylmuramate degradation. Its pathway is cell wall biogenesis; peptidoglycan recycling. In terms of biological role, catalyzes the specific phosphorylation of 1,6-anhydro-N-acetylmuramic acid (anhMurNAc) with the simultaneous cleavage of the 1,6-anhydro ring, generating MurNAc-6-P. Is required for the utilization of anhMurNAc either imported from the medium or derived from its own cell wall murein, and thus plays a role in cell wall recycling. This is Anhydro-N-acetylmuramic acid kinase from Escherichia coli O157:H7.